The chain runs to 123 residues: Ribosome-binding factor A (123 aa).

Belongs to the RbfA family. As to quaternary structure, monomer. Binds 30S ribosomal subunits, but not 50S ribosomal subunits or 70S ribosomes.

The protein resides in the cytoplasm. One of several proteins that assist in the late maturation steps of the functional core of the 30S ribosomal subunit. Associates with free 30S ribosomal subunits (but not with 30S subunits that are part of 70S ribosomes or polysomes). Required for efficient processing of 16S rRNA. May interact with the 5'-terminal helix region of 16S rRNA. The polypeptide is Ribosome-binding factor A (Neisseria meningitidis serogroup C (strain 053442)).